A 248-amino-acid polypeptide reads, in one-letter code: 3-deoxy-manno-octulosonate cytidylyltransferase (248 aa).

It belongs to the KdsB family.

Its subcellular location is the cytoplasm. The catalysed reaction is 3-deoxy-alpha-D-manno-oct-2-ulosonate + CTP = CMP-3-deoxy-beta-D-manno-octulosonate + diphosphate. The protein operates within nucleotide-sugar biosynthesis; CMP-3-deoxy-D-manno-octulosonate biosynthesis; CMP-3-deoxy-D-manno-octulosonate from 3-deoxy-D-manno-octulosonate and CTP: step 1/1. It functions in the pathway bacterial outer membrane biogenesis; lipopolysaccharide biosynthesis. Its function is as follows. Activates KDO (a required 8-carbon sugar) for incorporation into bacterial lipopolysaccharide in Gram-negative bacteria. The chain is 3-deoxy-manno-octulosonate cytidylyltransferase from Escherichia coli O139:H28 (strain E24377A / ETEC).